The sequence spans 717 residues: Cleavage stimulation factor subunit 3 (717 aa).

N-acetylserine is present on Ser-2. HAT repeat units follow at residues 45–77, 79–110, 117–152, 163–196, 221–261, 271–303, 319–352, 354–387, and 458–494; these read QPIDKARKTYERLVAQFPSSGRFWKLYIEAEIK, KNYDKVEKLFQRCLMKVLHIDLWKCYLSYVRE, SYKEKMAQAYDFALDKIGMEIMSYQIWVDYINFLKG, QRITAVRRVYQRGCVNPMINIEQLWRDYNKYEEG, KEYE…WEKS, LITKRVMFAYEQCLLVLGHHPDIWYEAAQYLEQ, LFSDEAANIYERAISTLLKKNMLLYFAYADYEES, MKYEKVHSIYNRLLAIEDIDPTLVYIQYMKFARR, and NEDNNTRVLFERVLTSGSLPPEKSGEIWARFLAFESN. The interval 684 to 705 is disordered; sequence VKRPNEDSDEDEEKGAVVPPVH. The residue at position 691 (Ser-691) is a Phosphoserine.

As to quaternary structure, homodimer. The CSTF complex is composed of CSTF1 (50 kDa subunit), CSTF2 (64 kDa subunit) and CSTF3 (77 kDa subunit). CSTF3 directly interacts with CSTF1 and CSTF2. Interacts with FIP1L1.

The protein localises to the nucleus. In terms of biological role, one of the multiple factors required for polyadenylation and 3'-end cleavage of mammalian pre-mRNAs. This chain is Cleavage stimulation factor subunit 3 (CSTF3), found in Homo sapiens (Human).